The chain runs to 350 residues: Leucine-rich repeat-containing protein 23 (350 aa).

Over residues 1–54 the composition is skewed to acidic residues; that stretch reads MEDETLEDGPEEEEEDEEEGTAEETNQDVTERDEEEEAEKDEEEDKEEEEEAEK. The tract at residues 1–64 is disordered; the sequence is MEDETLEDGP…EEPPPHMPLS (64 aa). LRR repeat units follow at residues 107 to 128, 129 to 150, 151 to 171, 172 to 193, 196 to 216, 217 to 238, 239 to 260, and 262 to 283; these read HLRY…GALT, HLLS…GELP, YLQV…FGHP, RLET…ECSN, SLHT…LNLP, SLRE…EALV, NLTT…SEHL, and ALQY…QKLY. In terms of domain architecture, LRRCT spans 296 to 334; that stretch reads NPCEEEEGYRMETLIALPQLERLDKDFFEEEEKREAAET. The stretch at 314–344 forms a coiled coil; the sequence is QLERLDKDFFEEEEKREAAETKKAREEEMAE. Residues 325–350 form a disordered region; sequence EEEKREAAETKKAREEEMAEPGEKGN.

Its subcellular location is the cytoplasm. The protein localises to the cytoskeleton. It localises to the flagellum axoneme. This Xenopus tropicalis (Western clawed frog) protein is Leucine-rich repeat-containing protein 23 (lrrc23).